We begin with the raw amino-acid sequence, 89 residues long: Small ribosomal subunit protein uS15 (89 aa).

This sequence belongs to the universal ribosomal protein uS15 family. As to quaternary structure, part of the 30S ribosomal subunit. Forms a bridge to the 50S subunit in the 70S ribosome, contacting the 23S rRNA.

Its function is as follows. One of the primary rRNA binding proteins, it binds directly to 16S rRNA where it helps nucleate assembly of the platform of the 30S subunit by binding and bridging several RNA helices of the 16S rRNA. Forms an intersubunit bridge (bridge B4) with the 23S rRNA of the 50S subunit in the ribosome. The polypeptide is Small ribosomal subunit protein uS15 (Bacteroides fragilis (strain ATCC 25285 / DSM 2151 / CCUG 4856 / JCM 11019 / LMG 10263 / NCTC 9343 / Onslow / VPI 2553 / EN-2)).